A 144-amino-acid polypeptide reads, in one-letter code: Large ribosomal subunit protein uL15 (144 aa).

The tract at residues 1–52 is disordered; that stretch reads MYLNTISPMKKSNHSSKRKGRGIGSGKGKTSGRGHKGQRSRSGGKVRRGFEG. Composition is skewed to basic residues over residues 11–21 and 30–47; these read KSNHSSKRKGR and TSGRGHKGQRSRSGGKVR.

This sequence belongs to the universal ribosomal protein uL15 family. As to quaternary structure, part of the 50S ribosomal subunit.

Its function is as follows. Binds to the 23S rRNA. The protein is Large ribosomal subunit protein uL15 of Wigglesworthia glossinidia brevipalpis.